Consider the following 450-residue polypeptide: 23S rRNA (uracil(1939)-C(5))-methyltransferase RlmD (450 aa).

Positions 12 to 70 (SKQLSAKLSLNVDQLDHLGAGIAQYQGKVVFIPGALPDETVTVQLTEQKKNYARAKLIK) constitute a TRAM domain. [4Fe-4S] cluster is bound by residues Cys-83, Cys-89, Cys-92, and Cys-171. S-adenosyl-L-methionine-binding residues include Gln-283, Phe-312, Asn-317, Glu-333, Asp-360, and Asp-380. The active-site Nucleophile is Cys-406.

The protein belongs to the class I-like SAM-binding methyltransferase superfamily. RNA M5U methyltransferase family. RlmD subfamily.

The enzyme catalyses uridine(1939) in 23S rRNA + S-adenosyl-L-methionine = 5-methyluridine(1939) in 23S rRNA + S-adenosyl-L-homocysteine + H(+). Functionally, catalyzes the formation of 5-methyl-uridine at position 1939 (m5U1939) in 23S rRNA. The protein is 23S rRNA (uracil(1939)-C(5))-methyltransferase RlmD of Shewanella sp. (strain W3-18-1).